Here is a 236-residue protein sequence, read N- to C-terminus: tRNA (guanine-N(1)-)-methyltransferase (236 aa).

S-adenosyl-L-methionine-binding positions include G110 and 129–134; that span reads LGDFVL.

This sequence belongs to the RNA methyltransferase TrmD family. In terms of assembly, homodimer.

It is found in the cytoplasm. It carries out the reaction guanosine(37) in tRNA + S-adenosyl-L-methionine = N(1)-methylguanosine(37) in tRNA + S-adenosyl-L-homocysteine + H(+). Functionally, specifically methylates guanosine-37 in various tRNAs. The chain is tRNA (guanine-N(1)-)-methyltransferase from Clostridium perfringens (strain ATCC 13124 / DSM 756 / JCM 1290 / NCIMB 6125 / NCTC 8237 / Type A).